The chain runs to 145 residues: Dihydrolipoyllysine-residue succinyltransferase component of 2-oxoglutarate dehydrogenase complex, mitochondrial (145 aa).

One can recognise a Lipoyl-binding domain in the interval 4-31 (ITVQTPAFAESVTEGDVRVEGGTPLFTL). At Ser-14 the chain carries Phosphoserine. N6-acetyllysine is present on residues Lys-36 and Lys-66. Catalysis depends on residues His-119 and Asp-123.

Belongs to the 2-oxoacid dehydrogenase family. The 2-oxoglutarate dehydrogenase complex is composed of OGDH (2-oxoglutarate dehydrogenase; E1), DLST (dihydrolipoamide succinyltransferase; E2), DLD (dihydrolipoamide dehydrogenase; E3) and the assembly factor KGD4. It contains multiple copies of the three enzymatic components (E1, E2 and E3). In the nucleus, the 2-oxoglutarate dehydrogenase complex associates with KAT2A. Interacts with ABHD11; this interaction maintains the functional lipoylation of the 2-oxoglutarate dehydrogenase complex. The cofactor is (R)-lipoate.

The protein localises to the mitochondrion matrix. Its subcellular location is the nucleus. It catalyses the reaction N(6)-[(R)-dihydrolipoyl]-L-lysyl-[protein] + succinyl-CoA = N(6)-[(R)-S(8)-succinyldihydrolipoyl]-L-lysyl-[protein] + CoA. It participates in amino-acid degradation; L-lysine degradation via saccharopine pathway; glutaryl-CoA from L-lysine: step 6/6. The protein operates within carbohydrate metabolism; tricarboxylic acid cycle. In terms of biological role, dihydrolipoamide succinyltransferase (E2) component of the 2-oxoglutarate dehydrogenase complex. The 2-oxoglutarate dehydrogenase complex catalyzes the overall conversion of 2-oxoglutarate to succinyl-CoA and CO(2). The 2-oxoglutarate dehydrogenase complex is mainly active in the mitochondrion. A fraction of the 2-oxoglutarate dehydrogenase complex also localizes in the nucleus and is required for lysine succinylation of histones: associates with KAT2A on chromatin and provides succinyl-CoA to histone succinyltransferase KAT2A. The chain is Dihydrolipoyllysine-residue succinyltransferase component of 2-oxoglutarate dehydrogenase complex, mitochondrial from Mesocricetus auratus (Golden hamster).